Consider the following 1154-residue polypeptide: CRISPR-associated endoribonuclease Cas13a (1154 aa).

2 HEPN-like fold regions span residues 330–466 (TTSN…RFIN) and 923–1154 (FVHL…EMKK).

Belongs to the CRISPR-associated endoribonuclease Cas13a family. Requires a divalent metal cation as cofactor.

Target RNA acts as an activator for non-specific ssRNA degradation. CRISPR (clustered regularly interspaced short palindromic repeat), is an adaptive immune system that provides protection against mobile genetic elements (viruses, transposable elements and conjugative plasmids). CRISPR clusters contain sequences complementary to antecedent mobile elements and target invading nucleic acids. Unlike many single-component effectors, this CRISPR-Cas system targets RNA. CRISPR clusters are transcribed from pre-CRISPR RNA (crRNA) and processed into crRNA by this protein. Cleaves linear target ssRNA in a pre-crRNA-dependent fashion, preferentially before U residues. Binding a viable target RNA target activates this protein for non-specific RNA degradation in vitro (called collateral RNA degradation), which is fairly sensitive as it requires picomolar levels of viable target RNA. This chain is CRISPR-associated endoribonuclease Cas13a, found in Paludibacter propionicigenes (strain DSM 17365 / JCM 13257 / WB4).